The following is a 515-amino-acid chain: Tripartite motif-containing protein 5 (515 aa).

Ala-2 is modified (N-acetylalanine). An RING-type zinc finger spans residues 15 to 60 (CPICLELLTEPLSLPCGHSLCQACITANHKESMLYKEEERSCPVCR). Residue Ser-87 is modified to Phosphoserine. The B box-type zinc finger occupies 92–133 (QKVDHCARHGEKLLLFCQEDSKVICWLCERSQEHRGHHTFLM). 4 residues coordinate Zn(2+): Cys-97, His-100, Cys-119, and His-125. A coiled-coil region spans residues 137-225 (AQEYHVKLQT…LTKSETEMVQ (89 aa)). Positions 187-200 (FEQLREILDWEESN) are required for interaction with GABARAP and for autophagy. A B30.2/SPRY domain is found at 283–515 (LKGMLDMFRE…VPMTLCSPSS (233 aa)).

The protein belongs to the TRIM/RBCC family. Can form homodimers and homotrimers. In addition to lower-order dimerization, also exhibits a higher-order multimerization and both low- and high-order multimerizations are essential for its restriction activity. Interacts with BTBD1 and BTBD2. Interacts with PSMC4, PSMC5, PSMD7 and HSPA8/HSC70. Interacts (via B30.2/SPRY domain) with HSPA1A/B. Interacts with PSMC2, MAP3K7/TAK1, TAB2 and TAB3. Interacts with SQSTM1. Interacts with TRIM6 and TRIM34. Interacts with ULK1 (phosphorylated form), GABARAP, GABARAPL1, GABARAPL2, MAP1LC3A, MAP1LC3C and BECN1. In terms of processing, degraded in a proteasome-independent fashion in the absence of viral infection but in a proteasome-dependent fashion following exposure to restriction sensitive virus. Post-translationally, autoubiquitinated in a RING finger- and UBE2D2-dependent manner. Monoubiquitinated by TRIM21. Deubiquitinated by Yersinia YopJ. Ubiquitination may not lead to proteasomal degradation.

It localises to the cytoplasm. It is found in the nucleus. The enzyme catalyses S-ubiquitinyl-[E2 ubiquitin-conjugating enzyme]-L-cysteine + [acceptor protein]-L-lysine = [E2 ubiquitin-conjugating enzyme]-L-cysteine + N(6)-ubiquitinyl-[acceptor protein]-L-lysine.. Its pathway is protein modification; protein ubiquitination. Its function is as follows. Capsid-specific restriction factor that prevents infection from non-host-adapted retroviruses. Blocks viral replication early in the life cycle, after viral entry but before reverse transcription. In addition to acting as a capsid-specific restriction factor, also acts as a pattern recognition receptor that activates innate immune signaling in response to the retroviral capsid lattice. Binding to the viral capsid triggers its E3 ubiquitin ligase activity, and in concert with the heterodimeric ubiquitin conjugating enzyme complex UBE2V1-UBE2N (also known as UBC13-UEV1A complex) generates 'Lys-63'-linked polyubiquitin chains, which in turn are catalysts in the autophosphorylation of the MAP3K7/TAK1 complex (includes TAK1, TAB2, and TAB3). Activation of the MAP3K7/TAK1 complex by autophosphorylation results in the induction and expression of NF-kappa-B and MAPK-responsive inflammatory genes, thereby leading to an innate immune response in the infected cell. Restricts infection by human immunodeficiency virus type 1 (HIV-1) and N-tropic murine leukemia virus (N-MLV). Plays a role in regulating autophagy through activation of autophagy regulator BECN1 by causing its dissociation from its inhibitors BCL2 and TAB2. This chain is Tripartite motif-containing protein 5 (TRIM5), found in Chlorocebus pygerythrus (Vervet monkey).